We begin with the raw amino-acid sequence, 794 residues long: K(+)-insensitive pyrophosphate-energized proton pump (794 aa).

The next 5 membrane-spanning stretches (helical) occupy residues alanine 20–valine 40, threonine 74–tryptophan 94, isoleucine 102–alanine 122, glycine 163–valine 183, and glycine 194–threonine 214. Substrate is bound at residue lysine 215. Mg(2+) contacts are provided by aspartate 218, aspartate 222, asparagine 245, and aspartate 248. 6 consecutive transmembrane segments (helical) span residues tyrosine 264–leucine 284, alanine 285–valine 305, glycine 321–leucine 341, isoleucine 365–threonine 385, alanine 422–threonine 442, and leucine 446–valine 466. Aspartate 476 is a binding site for Mg(2+). A run of 3 helical transmembrane segments spans residues alanine 508–serine 528, valine 564–valine 584, and isoleucine 641–glycine 661. 3 residues coordinate Ca(2+): aspartate 678, aspartate 704, and aspartate 708. Residue lysine 711 participates in substrate binding. 2 helical membrane-spanning segments follow: residues alanine 717–isoleucine 737 and valine 747–valine 767.

It belongs to the H(+)-translocating pyrophosphatase (TC 3.A.10) family. K(+)-insensitive subfamily. As to quaternary structure, homodimer. The cofactor is Mg(2+).

It is found in the cell membrane. It carries out the reaction diphosphate + H2O + H(+)(in) = 2 phosphate + 2 H(+)(out). In terms of biological role, proton pump that utilizes the energy of pyrophosphate hydrolysis as the driving force for proton movement across the membrane. Generates a proton motive force. The polypeptide is K(+)-insensitive pyrophosphate-energized proton pump (Streptomyces coelicolor (strain ATCC BAA-471 / A3(2) / M145)).